Here is a 439-residue protein sequence, read N- to C-terminus: ATP-dependent protease ATPase subunit HslU (439 aa).

ATP is bound by residues Ile17, 59–64 (GVGKTE), Asp251, Glu317, and Arg389.

The protein belongs to the ClpX chaperone family. HslU subfamily. As to quaternary structure, a double ring-shaped homohexamer of HslV is capped on each side by a ring-shaped HslU homohexamer. The assembly of the HslU/HslV complex is dependent on binding of ATP.

Its subcellular location is the cytoplasm. ATPase subunit of a proteasome-like degradation complex; this subunit has chaperone activity. The binding of ATP and its subsequent hydrolysis by HslU are essential for unfolding of protein substrates subsequently hydrolyzed by HslV. HslU recognizes the N-terminal part of its protein substrates and unfolds these before they are guided to HslV for hydrolysis. The polypeptide is ATP-dependent protease ATPase subunit HslU (Campylobacter jejuni (strain RM1221)).